The chain runs to 383 residues: Succinyl-diaminopimelate desuccinylase (383 aa).

His79 is a binding site for Zn(2+). The active site involves Asp81. Asp110 lines the Zn(2+) pocket. Glu141 (proton acceptor) is an active-site residue. Residues Glu142, Glu170, and His355 each contribute to the Zn(2+) site.

The protein belongs to the peptidase M20A family. DapE subfamily. As to quaternary structure, homodimer. It depends on Zn(2+) as a cofactor. Co(2+) serves as cofactor.

It catalyses the reaction N-succinyl-(2S,6S)-2,6-diaminopimelate + H2O = (2S,6S)-2,6-diaminopimelate + succinate. The protein operates within amino-acid biosynthesis; L-lysine biosynthesis via DAP pathway; LL-2,6-diaminopimelate from (S)-tetrahydrodipicolinate (succinylase route): step 3/3. Catalyzes the hydrolysis of N-succinyl-L,L-diaminopimelic acid (SDAP), forming succinate and LL-2,6-diaminopimelate (DAP), an intermediate involved in the bacterial biosynthesis of lysine and meso-diaminopimelic acid, an essential component of bacterial cell walls. This is Succinyl-diaminopimelate desuccinylase from Helicobacter pylori (strain Shi470).